The following is a 369-amino-acid chain: uncharacterized protein (369 aa).

It belongs to the myo-inositol 1-phosphate synthase family.

This is an uncharacterized protein from Mycobacterium leprae (strain TN).